Consider the following 32-residue polypeptide: U3-theraphotoxin-Hhn1r (32 aa).

Intrachain disulfides connect Cys-2-Cys-15, Cys-9-Cys-20, and Cys-14-Cys-27.

This sequence belongs to the neurotoxin 10 (Hwtx-1) family. 16 (Hntx-8) subfamily. In terms of tissue distribution, expressed by the venom gland.

The protein localises to the secreted. Ion channel inhibitor. In Cyriopagopus hainanus (Chinese bird spider), this protein is U3-theraphotoxin-Hhn1r.